Here is a 460-residue protein sequence, read N- to C-terminus: Argininosuccinate lyase (460 aa).

Belongs to the lyase 1 family. Argininosuccinate lyase subfamily.

It localises to the cytoplasm. It catalyses the reaction 2-(N(omega)-L-arginino)succinate = fumarate + L-arginine. Its pathway is amino-acid biosynthesis; L-arginine biosynthesis; L-arginine from L-ornithine and carbamoyl phosphate: step 3/3. This is Argininosuccinate lyase from Streptococcus sanguinis (strain SK36).